Consider the following 628-residue polypeptide: MBT domain-containing protein 1 (628 aa).

The interval 1–31 (MFDGYDSCSEDTSSSSSSEESEEEVAPLPSN) is disordered. The FCS-type zinc finger occupies 45–80 (PDGKSGMATCEMCGMVGVRDAFYSKTKRFCSVSCSR). Zn(2+) contacts are provided by C54, C57, C74, and C78. At K115 the chain carries N6-acetyllysine. 4 MBT repeats span residues 141 to 245 (FSWG…LVPP), 253 to 350 (TNWK…IGHR), 351 to 456 (FKRS…LTPP), and 464 to 560 (FKWF…LQPP). 2 disordered regions span residues 560–590 (PASQSSRENQSASSKQKKKAKSQQYKGHKKM) and 606–628 (NFLQGASDQESNGSANFYIKQEP). Residues 562–573 (SQSSRENQSASS) are compositionally biased toward low complexity. The segment covering 574 to 590 (KQKKKAKSQQYKGHKKM) has biased composition (basic residues). Over residues 609–620 (QGASDQESNGSA) the composition is skewed to polar residues.

Monomer. Component of the NuA4 histone acetyltransferase complex. Interacts with EPC1; interaction is direct and promotes recruitment of MBTD1 into the NuA4 histone acetyltransferase complex.

Its subcellular location is the nucleus. The protein resides in the chromosome. Functionally, chromatin reader component of the NuA4 histone acetyltransferase complex, a multiprotein complex involved in transcriptional activation of select genes principally by acetylation of nucleosomal histones H4 and H2A. The NuA4 complex plays a direct role in repair of DNA double-strand breaks (DSBs) by promoting homologous recombination (HR). MBTD1 specifically recognizes and binds monomethylated and dimethylated 'Lys-20' on histone H4 (H4K20me1 and H4K20me2, respectively). In the NuA4 complex, MBTD1 promotes recruitment of the complex to H4K20me marks by competing with TP53BP1 for binding to H4K20me. Following recruitment to H4K20me at DNA breaks, the NuA4 complex catalyzes acetylation of 'Lys-15' on histone H2A (H2AK15), blocking the ubiquitination mark required for TP53BP1 localization at DNA breaks, thereby promoting homologous recombination (HR). The protein is MBT domain-containing protein 1 of Homo sapiens (Human).